Here is a 253-residue protein sequence, read N- to C-terminus: Hydroxyacylglutathione hydrolase (253 aa).

Residues His59, His61, Asp63, His64, His118, Asp143, and His181 each contribute to the Zn(2+) site.

Belongs to the metallo-beta-lactamase superfamily. Glyoxalase II family. Monomer. The cofactor is Zn(2+).

The enzyme catalyses an S-(2-hydroxyacyl)glutathione + H2O = a 2-hydroxy carboxylate + glutathione + H(+). The protein operates within secondary metabolite metabolism; methylglyoxal degradation; (R)-lactate from methylglyoxal: step 2/2. Its function is as follows. Thiolesterase that catalyzes the hydrolysis of S-D-lactoyl-glutathione to form glutathione and D-lactic acid. The sequence is that of Hydroxyacylglutathione hydrolase from Prochlorococcus marinus (strain SARG / CCMP1375 / SS120).